Reading from the N-terminus, the 971-residue chain is Outer capsid protein VP2 (971 aa).

It belongs to the orbivirus VP2 family.

Its subcellular location is the virion. The VP2 protein is one of the two proteins (with VP5) which constitute the virus particle outer capsid. It is the major target of the host immunogenic response. The polypeptide is Outer capsid protein VP2 (Segment-2) (Epizootic hemorrhagic disease virus 1 (EHDV-1)).